The following is a 316-amino-acid chain: Pantothenate kinase (316 aa).

95–102 is a binding site for ATP; it reads GSVAVGKS.

The protein belongs to the prokaryotic pantothenate kinase family.

The protein resides in the cytoplasm. The catalysed reaction is (R)-pantothenate + ATP = (R)-4'-phosphopantothenate + ADP + H(+). It participates in cofactor biosynthesis; coenzyme A biosynthesis; CoA from (R)-pantothenate: step 1/5. In Shewanella sp. (strain MR-7), this protein is Pantothenate kinase.